The chain runs to 207 residues: Guanylate kinase (207 aa).

The Guanylate kinase-like domain maps to 4–184 (GTLYIVSAPS…ALLDLKTIIR (181 aa)). Position 11 to 18 (11 to 18 (APSGAGKS)) interacts with ATP.

Belongs to the guanylate kinase family.

It is found in the cytoplasm. The enzyme catalyses GMP + ATP = GDP + ADP. Essential for recycling GMP and indirectly, cGMP. This is Guanylate kinase from Sodalis glossinidius (strain morsitans).